The sequence spans 82 residues: Small ribosomal subunit protein bS16 (82 aa).

It belongs to the bacterial ribosomal protein bS16 family.

In Francisella philomiragia subsp. philomiragia (strain ATCC 25017 / CCUG 19701 / FSC 153 / O#319-036), this protein is Small ribosomal subunit protein bS16.